We begin with the raw amino-acid sequence, 1055 residues long: Putative helicase/primase complex protein (1055 aa).

The protein belongs to the asfivirus F1055L family.

Functionally, may be involved in DNA replication. This chain is Putative helicase/primase complex protein, found in Ornithodoros (relapsing fever ticks).